The primary structure comprises 126 residues: MARLVGVDLPREKRLEIALTYIFGVGRTRAKETLAATGVSPDLRVRDLSDDDLVALRDHIEGNYRVEGDLRREVAADIRRKVEIGTYQGLRHRRGLPVRGQRTKTNARTRKGPKRTVAGKKKAGRK.

Residues 92–126 (HRRGLPVRGQRTKTNARTRKGPKRTVAGKKKAGRK) form a disordered region.

The protein belongs to the universal ribosomal protein uS13 family. Part of the 30S ribosomal subunit. Forms a loose heterodimer with protein S19. Forms two bridges to the 50S subunit in the 70S ribosome.

Its function is as follows. Located at the top of the head of the 30S subunit, it contacts several helices of the 16S rRNA. In the 70S ribosome it contacts the 23S rRNA (bridge B1a) and protein L5 of the 50S subunit (bridge B1b), connecting the 2 subunits; these bridges are implicated in subunit movement. Contacts the tRNAs in the A and P-sites. The polypeptide is Small ribosomal subunit protein uS13 (Kineococcus radiotolerans (strain ATCC BAA-149 / DSM 14245 / SRS30216)).